A 466-amino-acid chain; its full sequence is Protein tilB homolog (466 aa).

LRR repeat units lie at residues 22 to 43 (SLEE…DKWC), 45 to 66 (DLKI…SKLK), 67 to 88 (KLEY…EGCE), and 89 to 110 (ELAK…KTLK). The 39-residue stretch at 123–161 (NPCAFFDHYREFVVATLPQLKWLDGKGIEPSERIKALQE) folds into the LRRCT domain. The stretch at 178 to 204 (LKRAKLKEEAQRKHQEEDKNEDKRSNA) forms a coiled coil. Basic and acidic residues-rich tracts occupy residues 185 to 202 (EEAQ…DKRS) and 269 to 279 (EKQRKNQEKLS). 2 disordered regions span residues 185-206 (EEAQ…NAGF) and 269-288 (EKQR…VKPP). A CS domain is found at 301-396 (VNEPKIDFSL…GGQRAFTSVK (96 aa)). Residues 418-466 (VDPSKHSFPDVTNIVQGKKHTPRRRPEPKIIPSEEDPTFEDNPEVPPLI) form a disordered region. Acidic residues predominate over residues 450-460 (SEEDPTFEDNP).

It belongs to the tilB family. As to quaternary structure, interacts (via CS domain) with ZMYND10 (via C-terminus).

The protein resides in the cytoplasm. It is found in the cell projection. It localises to the cilium. May play a role in dynein arm assembly, hence essential for proper axoneme building for cilia motility. This is Protein tilB homolog (LRCC6) from Macaca fascicularis (Crab-eating macaque).